Reading from the N-terminus, the 240-residue chain is MAVNIIATRAAPKMASKKEHQYCLLDSQEKRHGHYPFSFELKPYGQTGANIIGVQGSLTHVIKMTVFPFMIPFPLQKTHIDDFIGGRIYLFFKELDMQAVSDVNGMQYHFEFKVVPVSPNQVELLPVNNKYKFTYAIPVVQYLTPIFYDLSGPLDFPLDTLSVHVDSLSNHIQLPIQNHNLTTGDRVFISGYKHLQTIELCKNNKIFIKYIPPLSSEKIKLYIPKNRIRIPLYFKSLKNV.

This sequence belongs to the asfivirus H240R family.

Its subcellular location is the virion. Functionally, forms the penton at the fivefold vertices of the icosahedral capsid. Together with the minor capsid proteins (p17, p49, and M1249L), forms a complicated network immediately below the outer capsid shell, stabilizing the whole capsid. The chain is Penton protein H240R from African swine fever virus (strain Badajoz 1971 Vero-adapted) (Ba71V).